The chain runs to 492 residues: Glutamyl-tRNA(Gln) amidotransferase subunit A (492 aa).

Active-site charge relay system residues include Lys80 and Ser155. The Acyl-ester intermediate role is filled by Ser179.

The protein belongs to the amidase family. GatA subfamily. Heterotrimer of A, B and C subunits.

It carries out the reaction L-glutamyl-tRNA(Gln) + L-glutamine + ATP + H2O = L-glutaminyl-tRNA(Gln) + L-glutamate + ADP + phosphate + H(+). Functionally, allows the formation of correctly charged Gln-tRNA(Gln) through the transamidation of misacylated Glu-tRNA(Gln) in organisms which lack glutaminyl-tRNA synthetase. The reaction takes place in the presence of glutamine and ATP through an activated gamma-phospho-Glu-tRNA(Gln). The protein is Glutamyl-tRNA(Gln) amidotransferase subunit A of Mycobacteroides abscessus (strain ATCC 19977 / DSM 44196 / CCUG 20993 / CIP 104536 / JCM 13569 / NCTC 13031 / TMC 1543 / L948) (Mycobacterium abscessus).